The sequence spans 388 residues: Protochlorophyllide reductase A, chloroplastic (388 aa).

The transit peptide at 1–74 (MALQLLPSTL…SPSGKKTLRQ (74 aa)) directs the protein to the chloroplast. The segment covering 48 to 68 (VATAPSPVTTSPGSTASSPSG) has biased composition (low complexity). Positions 48–69 (VATAPSPVTTSPGSTASSPSGK) are disordered.

The protein belongs to the short-chain dehydrogenases/reductases (SDR) family. POR subfamily.

It localises to the plastid. The protein localises to the chloroplast. It catalyses the reaction chlorophyllide a + NADP(+) = protochlorophyllide a + NADPH + H(+). It functions in the pathway porphyrin-containing compound metabolism; chlorophyll biosynthesis. In terms of biological role, phototransformation of protochlorophyllide (Pchlide) to chlorophyllide (Chlide). This is Protochlorophyllide reductase A, chloroplastic (PORA) from Hordeum vulgare (Barley).